The primary structure comprises 306 residues: D-alanine--D-alanine ligase (306 aa).

Residues 101–303 (KLLWQGAGLP…FSQLVVRILE (203 aa)) form the ATP-grasp domain. 134 to 189 (ISALGLPLIVKPSREGSSVGMTKVVEENALQGALSLAFQHDDEILIEKWLCGPEFT) contacts ATP. Mg(2+) contacts are provided by D257, E270, and N272.

It belongs to the D-alanine--D-alanine ligase family. Mg(2+) serves as cofactor. It depends on Mn(2+) as a cofactor.

The protein localises to the cytoplasm. It catalyses the reaction 2 D-alanine + ATP = D-alanyl-D-alanine + ADP + phosphate + H(+). It functions in the pathway cell wall biogenesis; peptidoglycan biosynthesis. In terms of biological role, cell wall formation. The sequence is that of D-alanine--D-alanine ligase from Salmonella paratyphi A (strain ATCC 9150 / SARB42).